A 126-amino-acid polypeptide reads, in one-letter code: VDVSGDAAAGEKAFRQCITCHVVVDDSGETLAGRNAKVGPNLYKVPGRHAGQIEGFRYSDSMSQAGQNGLVWVEEEFVKYVQDPTGYLREYLGDSKARGAMTHKVRKEDEAVDIYAYLASLGVHEE.

Positions 17, 20, 21, and 101 each coordinate heme c.

It belongs to the cytochrome c family. Post-translationally, binds 1 heme c group covalently per subunit.

The protein resides in the periplasm. Cytochrome c2 is found mainly in purple, non-sulfur, photosynthetic bacteria where it functions as the electron donor to the oxidized bacteriochlorophyll in the photophosphorylation pathway. However, it may also have a role in the respiratory chain and is found in some non-photosynthetic bacteria. The sequence is that of Cytochrome c2 from Rhodovulum adriaticum (Rhodopseudomonas adriatica).